We begin with the raw amino-acid sequence, 531 residues long: 5-(hydroxymethyl)furfural oxidase (531 aa).

FAD-binding positions include 15–16, 36–37, W68, L94, G98, 102–105, V233, and W466; these read TA, EA, and NMVV. The Proton acceptor role is filled by H467. FAD is bound by residues A501 and 512–513; that span reads TN.

It belongs to the GMC oxidoreductase family. Monomer. FAD serves as cofactor.

It catalyses the reaction 5-hydroxymethylfurfural + 3 O2 + 2 H2O = 2,5-dicarboxyfuran + 3 H2O2 + 2 H(+). It carries out the reaction benzylthiol + O2 = benzothialdehyde + H2O2. In terms of biological role, involved in the degradation and detoxification of 5-(hydroxymethyl)furfural (HMF) by mediating its oxidation to furan-2,5-dicarboxylate (FDCA), a biobased platform chemical for the production of polymers. Active with a wide range of aromatic and aliphatic primary alcohols and aldehydes: acts on alcohol groups and requires the spontaneous hydration of aldehyde groups for their oxidation. To a lesser extent, is also able to catalyze the oxidation of thiols that are structurally similar to its alcohol substrates, yielding the corresponding thiocarbonyls. The protein is 5-(hydroxymethyl)furfural oxidase of Methylovorus sp. (strain MP688).